The chain runs to 71 residues: Large ribosomal subunit protein bL31 (71 aa).

Cys-16, Cys-18, Cys-37, and Cys-40 together coordinate Zn(2+).

This sequence belongs to the bacterial ribosomal protein bL31 family. Type A subfamily. As to quaternary structure, part of the 50S ribosomal subunit. It depends on Zn(2+) as a cofactor.

In terms of biological role, binds the 23S rRNA. The chain is Large ribosomal subunit protein bL31 from Solidesulfovibrio magneticus (strain ATCC 700980 / DSM 13731 / RS-1) (Desulfovibrio magneticus).